The chain runs to 564 residues: Malignant brain tumor repeat protein 1 (564 aa).

MBT repeat units follow at residues Phe-64–Leu-176, Arg-205–Thr-327, Leu-331–Leu-442, and Phe-450–Pro-549.

As to quaternary structure, interacts with histone H3 that is trimethylated at 'Lys-9' (H3K9me3).

The chain is Malignant brain tumor repeat protein 1 (mbtr-1) from Caenorhabditis elegans.